Here is a 274-residue protein sequence, read N- to C-terminus: Large ribosomal subunit protein uL2 (274 aa).

The disordered stretch occupies residues 223-258; sequence VAMNPVDHPHGGGEGRTSGGRHPVTPWGIPTKGYKT.

It belongs to the universal ribosomal protein uL2 family. Part of the 50S ribosomal subunit. Forms a bridge to the 30S subunit in the 70S ribosome.

One of the primary rRNA binding proteins. Required for association of the 30S and 50S subunits to form the 70S ribosome, for tRNA binding and peptide bond formation. It has been suggested to have peptidyltransferase activity; this is somewhat controversial. Makes several contacts with the 16S rRNA in the 70S ribosome. The protein is Large ribosomal subunit protein uL2 of Pelobacter propionicus (strain DSM 2379 / NBRC 103807 / OttBd1).